The following is a 272-amino-acid chain: Hydroxyethylthiazole kinase (272 aa).

A substrate-binding site is contributed by M46. Residues R122 and T168 each contribute to the ATP site. G195 is a binding site for substrate.

Belongs to the Thz kinase family. Mg(2+) is required as a cofactor.

It carries out the reaction 5-(2-hydroxyethyl)-4-methylthiazole + ATP = 4-methyl-5-(2-phosphooxyethyl)-thiazole + ADP + H(+). Its pathway is cofactor biosynthesis; thiamine diphosphate biosynthesis; 4-methyl-5-(2-phosphoethyl)-thiazole from 5-(2-hydroxyethyl)-4-methylthiazole: step 1/1. Catalyzes the phosphorylation of the hydroxyl group of 4-methyl-5-beta-hydroxyethylthiazole (THZ). This Alkaliphilus metalliredigens (strain QYMF) protein is Hydroxyethylthiazole kinase.